A 195-amino-acid chain; its full sequence is Nucleoid occlusion factor SlmA (195 aa).

The HTH tetR-type domain maps to 7 to 67; that stretch reads TNRRAQILQA…GLIEFIEETL (61 aa). Residues 30-49 constitute a DNA-binding region (H-T-H motif); it reads TTAKLAEKVGVSEAALYRHF. Residues 109 to 141 are a coiled coil; sequence DALMGEQDRLRARIAKLFERLETQLKQVLRERK.

Belongs to the nucleoid occlusion factor SlmA family. In terms of assembly, homodimer. Interacts with FtsZ.

It is found in the cytoplasm. The protein localises to the nucleoid. In terms of biological role, required for nucleoid occlusion (NO) phenomenon, which prevents Z-ring formation and cell division over the nucleoid. Acts as a DNA-associated cell division inhibitor that binds simultaneously chromosomal DNA and FtsZ, and disrupts the assembly of FtsZ polymers. SlmA-DNA-binding sequences (SBS) are dispersed on non-Ter regions of the chromosome, preventing FtsZ polymerization at these regions. The protein is Nucleoid occlusion factor SlmA of Alteromonas mediterranea (strain DSM 17117 / CIP 110805 / LMG 28347 / Deep ecotype).